The primary structure comprises 141 residues: Protein NrdI (141 aa).

Belongs to the NrdI family.

Functionally, probably involved in ribonucleotide reductase function. The sequence is that of Protein NrdI from Wigglesworthia glossinidia brevipalpis.